The sequence spans 389 residues: Stilbene synthase 1 (389 aa).

55-58 lines the substrate pocket; it reads KFQR. Residue C164 is part of the active site. Substrate-binding positions include L267 and 305–307; that span reads GGR.

This sequence belongs to the thiolase-like superfamily. Chalcone/stilbene synthases family. As to quaternary structure, homodimer.

It localises to the cytoplasm. It catalyses the reaction 4-coumaroyl-CoA + 3 malonyl-CoA + 3 H(+) = trans-resveratrol + 4 CO2 + 4 CoA. It functions in the pathway phytoalexin biosynthesis; 3,4',5-trihydroxystilbene biosynthesis; 3,4',5-trihydroxystilbene from trans-4-coumarate: step 2/2. The sequence is that of Stilbene synthase 1 from Arachis hypogaea (Peanut).